Reading from the N-terminus, the 315-residue chain is Probable cell division protein WhiA (315 aa).

Positions S278–H312 form a DNA-binding region, H-T-H motif.

The protein belongs to the WhiA family.

Functionally, involved in cell division and chromosome segregation. This is Probable cell division protein WhiA from Oenococcus oeni (strain ATCC BAA-331 / PSU-1).